The sequence spans 74 residues: Large ribosomal subunit protein bL31 (74 aa).

This sequence belongs to the bacterial ribosomal protein bL31 family. Type A subfamily. Part of the 50S ribosomal subunit.

Its function is as follows. Binds the 23S rRNA. This chain is Large ribosomal subunit protein bL31, found in Chlorobaculum parvum (strain DSM 263 / NCIMB 8327) (Chlorobium vibrioforme subsp. thiosulfatophilum).